Here is a 316-residue protein sequence, read N- to C-terminus: Apolipoprotein E (316 aa).

The first 18 residues, 1–18 (MKVLWVALVITLLAGCQA), serve as a signal peptide directing secretion. 8 tandem repeats follow at residues 79 to 100 (VLMDETMKEVKAYREELEGQLG), 101 to 122 (PIAQETQARVSKELQAAQARLA), 123 to 144 (SDMEDVRSRVAQYRSEVQALMG), 145 to 166 (QTTDELRGRLASHLRKLRKRLL), 167 to 188 (RDAEDLQKRLVVYRAGALEGSE), 189 to 210 (RSVSAIRERLGPLVEQGRVRAA), 211 to 232 (TVGTLASQTLRERAEAWHQKLR), and 233 to 254 (GRMEEMGTQARDHLEEMREQLE). The tract at residues 79-254 (VLMDETMKEV…HLEEMREQLE (176 aa)) is 8 X 22 AA approximate tandem repeats. An LDL and other lipoprotein receptors binding region spans residues 157 to 167 (HLRKLRKRLLR). Residue 161 to 164 (LRKR) coordinates heparin. The segment at 209 to 289 (AATVGTLASQ…SWFEPLVEDM (81 aa)) is lipid-binding and lipoprotein association. A heparin-binding site is contributed by 228-235 (HQKLRGRM). A homooligomerization region spans residues 265 to 316 (SQMRLQAEAFQARLKSWFEPLVEDMQRQWAGLVEKVQLAMATGPTSAPIENN). Positions 277-289 (RLKSWFEPLVEDM) are specificity for association with VLDL.

Belongs to the apolipoprotein A1/A4/E family. Homotetramer. May interact with ABCA1; functionally associated with ABCA1 in the biogenesis of HDLs. May interact with APP/A4 amyloid-beta peptide; the interaction is extremely stable in vitro but its physiological significance is unclear. May interact with MAPT. May interact with MAP2. In the cerebrospinal fluid, interacts with secreted SORL1. Interacts with PMEL; this allows the loading of PMEL luminal fragment on ILVs to induce fibril nucleation. In terms of processing, APOE exists as multiple glycosylated and sialylated glycoforms within cells and in plasma. The extent of glycosylation and sialylation are tissue and context specific. Glycated in plasma VLDL. Post-translationally, phosphorylated by FAM20C in the extracellular medium.

It is found in the secreted. It localises to the extracellular space. Its subcellular location is the extracellular matrix. The protein resides in the extracellular vesicle. The protein localises to the endosome. It is found in the multivesicular body. Functionally, APOE is an apolipoprotein, a protein associating with lipid particles, that mainly functions in lipoprotein-mediated lipid transport between organs via the plasma and interstitial fluids. APOE is a core component of plasma lipoproteins and is involved in their production, conversion and clearance. Apolipoproteins are amphipathic molecules that interact both with lipids of the lipoprotein particle core and the aqueous environment of the plasma. As such, APOE associates with chylomicrons, chylomicron remnants, very low density lipoproteins (VLDL) and intermediate density lipoproteins (IDL) but shows a preferential binding to high-density lipoproteins (HDL). It also binds a wide range of cellular receptors including the LDL receptor/LDLR and the very low-density lipoprotein receptor/VLDLR that mediate the cellular uptake of the APOE-containing lipoprotein particles. Finally, APOE also has a heparin-binding activity and binds heparan-sulfate proteoglycans on the surface of cells, a property that supports the capture and the receptor-mediated uptake of APOE-containing lipoproteins by cells. The chain is Apolipoprotein E (APOE) from Tursiops truncatus (Atlantic bottle-nosed dolphin).